Here is a 184-residue protein sequence, read N- to C-terminus: ATP synthase subunit b, chloroplastic (184 aa).

A helical transmembrane segment spans residues 27-49; the sequence is LATNPINLSVVLGVLIFFGKGVL.

The protein belongs to the ATPase B chain family. As to quaternary structure, F-type ATPases have 2 components, F(1) - the catalytic core - and F(0) - the membrane proton channel. F(1) has five subunits: alpha(3), beta(3), gamma(1), delta(1), epsilon(1). F(0) has four main subunits: a(1), b(1), b'(1) and c(10-14). The alpha and beta chains form an alternating ring which encloses part of the gamma chain. F(1) is attached to F(0) by a central stalk formed by the gamma and epsilon chains, while a peripheral stalk is formed by the delta, b and b' chains.

Its subcellular location is the plastid. The protein resides in the chloroplast thylakoid membrane. Functionally, f(1)F(0) ATP synthase produces ATP from ADP in the presence of a proton or sodium gradient. F-type ATPases consist of two structural domains, F(1) containing the extramembraneous catalytic core and F(0) containing the membrane proton channel, linked together by a central stalk and a peripheral stalk. During catalysis, ATP synthesis in the catalytic domain of F(1) is coupled via a rotary mechanism of the central stalk subunits to proton translocation. Its function is as follows. Component of the F(0) channel, it forms part of the peripheral stalk, linking F(1) to F(0). The chain is ATP synthase subunit b, chloroplastic from Lepidium virginicum (Virginia pepperweed).